A 258-amino-acid chain; its full sequence is uncharacterized protein (258 aa).

This is an uncharacterized protein from Acidianus filamentous virus 2 (isolate Italy/Pozzuoli) (AFV-2).